Reading from the N-terminus, the 227-residue chain is MELVFIRHGQSEWNAKNLFTGWRDVKLSEQGLAEAAAAGKKLKENGYEFDIAFTSVLTRAIKTCNIVLEESDQLFVPQIKTWRLNERHYGRLQGLDKKQTAEKYGDEQVRIWRRSYDTLPPLLDKDDAFSAHKDRRYAHLPADVVPDGENLKVTLERVLPFWEDQIAPAILSGKRVLVAAHGNSLRALAKHIEGISDEDIMGLEIPTGQPLVYKLDDNLKVIEKFYL.

Substrate is bound by residues 7 to 14 (RHGQSEWN), 20 to 21 (TG), Arg-59, 86 to 89 (ERHY), Lys-97, 113 to 114 (RR), and 182 to 183 (GN). Residue His-8 is the Tele-phosphohistidine intermediate of the active site. The Proton donor/acceptor role is filled by Glu-86.

It belongs to the phosphoglycerate mutase family. BPG-dependent PGAM subfamily. In terms of assembly, homodimer.

It catalyses the reaction (2R)-2-phosphoglycerate = (2R)-3-phosphoglycerate. Its pathway is carbohydrate degradation; glycolysis; pyruvate from D-glyceraldehyde 3-phosphate: step 3/5. Functionally, catalyzes the interconversion of 2-phosphoglycerate and 3-phosphoglycerate. This is 2,3-bisphosphoglycerate-dependent phosphoglycerate mutase from Neisseria gonorrhoeae (strain ATCC 700825 / FA 1090).